We begin with the raw amino-acid sequence, 262 residues long: NADPH-dependent 7-cyano-7-deazaguanine reductase (262 aa).

Residue 69–71 (IES) coordinates substrate. NADPH is bound at residue 71-72 (SK). Catalysis depends on cysteine 170, which acts as the Thioimide intermediate. Residue aspartate 177 is the Proton donor of the active site. 209–210 (HE) serves as a coordination point for substrate. 238 to 239 (RG) provides a ligand contact to NADPH.

Belongs to the GTP cyclohydrolase I family. QueF type 2 subfamily. As to quaternary structure, homodimer.

The protein localises to the cytoplasm. The catalysed reaction is 7-aminomethyl-7-carbaguanine + 2 NADP(+) = 7-cyano-7-deazaguanine + 2 NADPH + 3 H(+). It participates in tRNA modification; tRNA-queuosine biosynthesis. Its function is as follows. Catalyzes the NADPH-dependent reduction of 7-cyano-7-deazaguanine (preQ0) to 7-aminomethyl-7-deazaguanine (preQ1). This chain is NADPH-dependent 7-cyano-7-deazaguanine reductase, found in Buchnera aphidicola subsp. Schizaphis graminum (strain Sg).